Consider the following 247-residue polypeptide: 2,3-bisphosphoglycerate-dependent phosphoglycerate mutase (247 aa).

Residues 8–15, 21–22, Arg60, 87–90, Lys98, 114–115, and 183–184 contribute to the substrate site; these read RHGESTWN, TG, ERHY, RR, and GN. The active-site Tele-phosphohistidine intermediate is the His9. Residue Glu87 is the Proton donor/acceptor of the active site.

Belongs to the phosphoglycerate mutase family. BPG-dependent PGAM subfamily. Homodimer.

The enzyme catalyses (2R)-2-phosphoglycerate = (2R)-3-phosphoglycerate. It participates in carbohydrate degradation; glycolysis; pyruvate from D-glyceraldehyde 3-phosphate: step 3/5. Catalyzes the interconversion of 2-phosphoglycerate and 3-phosphoglycerate. This is 2,3-bisphosphoglycerate-dependent phosphoglycerate mutase from Acidovorax sp. (strain JS42).